The primary structure comprises 140 residues: Pro-Viral epidermal growth factor (140 aa).

Positions 1–18 are cleaved as a signal peptide; the sequence is MSMKYLMLLFAAMIIRSF. The Extracellular segment spans residues 19 to 100; it reads ADSGNAIETT…SENPNTTTSY (82 aa). N34 carries N-linked (GlcNAc...) asparagine; by host glycosylation. The 41-residue stretch at 41–81 folds into the EGF-like domain; sequence AIRLCGPEGDGYCLHGDCIHARDIDGMYCRCSHGYTGIRCQ. Intrachain disulfides connect C45-C58, C53-C69, and C71-C80. N95 is a glycosylation site (N-linked (GlcNAc...) asparagine; by host). The helical transmembrane segment at 101-121 threads the bilayer; the sequence is IPSPGIMLVLVGIIIITCCLL. The Cytoplasmic segment spans residues 122–140; it reads SVYRFTRRTKLPIQDMVVP.

This sequence belongs to the orthopoxvirus OPG019 family. Viral epidermal growth factor interacts with host EGFR and promotes EGFR dimerization. Cleaved at the cell surface by host ADAM10, thereby releasing the secreted form of VGF.

The protein resides in the host membrane. Its subcellular location is the secreted. Stimulates cellular proliferation (hyperplasia)and mobility around infected cells to promote rapid and efficient spread of infection. This effect is beneficial for virus replication in vivo, because poxviruses replicate possibly better in proliferating cells than in quiescent cells. Acts by binding host EGFR, inducing its dimerization, autophosphorylation and leading to activation of several cellular pathways regulating cell proliferation or cell survival. The activation by host EGFR of mitogen activated protein kinases (MAPK) and extracellular-signal regulated kinases (ERK) are essential for the positive effect of vaccinia growth factor on poxvirus virulence in vivo. In Bos taurus (Bovine), this protein is Pro-Viral epidermal growth factor (OPG019).